Here is a 207-residue protein sequence, read N- to C-terminus: p-benzoquinone reductase (207 aa).

The 192-residue stretch at 5-196 folds into the Flavodoxin-like domain; that stretch reads IQIVFYSSYG…QIARFQGKHV (192 aa). Residues 11–16, 84–86, 119–125, and H140 each bind FMN; these read SSYGHI, TRF, and STASQHG. NADP(+) is bound at residue Y13.

This sequence belongs to the WrbA family. In terms of assembly, homodimer. The cofactor is FMN.

It catalyses the reaction 1,4-benzoquinone + NADPH + H(+) = hydroquinone + NADP(+). It functions in the pathway xenobiotic degradation; 4-nitrophenol degradation. Functionally, involved in the degradation of para-nitrophenol (PNP). Catalyzes the reduction of p-benzoquinone to hydroquinone. This chain is p-benzoquinone reductase (pnpB), found in Pseudomonas sp. (strain WBC-3).